The primary structure comprises 184 residues: MGVIQAIDRLMTNPIPDGQVDDILRPQGESPLLQKGYVTTSVDALLNWARTGSMWPMTFGLACCAVEMMHAGAARLDLDRYGIVFRPSPRQSDVMIVAGTLVNKMAPALRKVYDQMPDPKWVISMGSCANGGGYYHYSYSVVRGCDRIVPVDVYVPGCPPTAEALVYGILQLQKKIWRTQTIAG.

Residues cysteine 63, cysteine 64, cysteine 128, and cysteine 158 each coordinate [4Fe-4S] cluster.

This sequence belongs to the complex I 20 kDa subunit family. NDH-1 is composed of 14 different subunits. Subunits NuoB, C, D, E, F, and G constitute the peripheral sector of the complex. It depends on [4Fe-4S] cluster as a cofactor.

It localises to the cell inner membrane. It carries out the reaction a quinone + NADH + 5 H(+)(in) = a quinol + NAD(+) + 4 H(+)(out). NDH-1 shuttles electrons from NADH, via FMN and iron-sulfur (Fe-S) centers, to quinones in the respiratory chain. The immediate electron acceptor for the enzyme in this species is believed to be ubiquinone. Couples the redox reaction to proton translocation (for every two electrons transferred, four hydrogen ions are translocated across the cytoplasmic membrane), and thus conserves the redox energy in a proton gradient. The sequence is that of NADH-quinone oxidoreductase subunit B from Xylella fastidiosa (strain M12).